A 232-amino-acid polypeptide reads, in one-letter code: Large ribosomal subunit protein uL1 (232 aa).

Belongs to the universal ribosomal protein uL1 family. In terms of assembly, part of the 50S ribosomal subunit.

Its function is as follows. Binds directly to 23S rRNA. The L1 stalk is quite mobile in the ribosome, and is involved in E site tRNA release. In terms of biological role, protein L1 is also a translational repressor protein, it controls the translation of the L11 operon by binding to its mRNA. The chain is Large ribosomal subunit protein uL1 from Methylorubrum extorquens (strain CM4 / NCIMB 13688) (Methylobacterium extorquens).